The sequence spans 203 residues: Outer-membrane lipoprotein carrier protein (203 aa).

The N-terminal stretch at 1–20 is a signal peptide; it reads MRRGRVWLAALCLAAGAAHA.

The protein belongs to the LolA family. In terms of assembly, monomer.

Its subcellular location is the periplasm. Functionally, participates in the translocation of lipoproteins from the inner membrane to the outer membrane. Only forms a complex with a lipoprotein if the residue after the N-terminal Cys is not an aspartate (The Asp acts as a targeting signal to indicate that the lipoprotein should stay in the inner membrane). This chain is Outer-membrane lipoprotein carrier protein, found in Methylibium petroleiphilum (strain ATCC BAA-1232 / LMG 22953 / PM1).